The primary structure comprises 118 residues: Large ribosomal subunit protein bL20 (118 aa).

It belongs to the bacterial ribosomal protein bL20 family.

Functionally, binds directly to 23S ribosomal RNA and is necessary for the in vitro assembly process of the 50S ribosomal subunit. It is not involved in the protein synthesizing functions of that subunit. The sequence is that of Large ribosomal subunit protein bL20 from Desulfovibrio desulfuricans (strain ATCC 27774 / DSM 6949 / MB).